The sequence spans 293 residues: 4-hydroxy-tetrahydrodipicolinate synthase (293 aa).

Position 44 (Thr-44) interacts with pyruvate. Tyr-132 (proton donor/acceptor) is an active-site residue. Lys-160 acts as the Schiff-base intermediate with substrate in catalysis. A pyruvate-binding site is contributed by Ile-204.

This sequence belongs to the DapA family. Homotetramer; dimer of dimers.

Its subcellular location is the cytoplasm. It carries out the reaction L-aspartate 4-semialdehyde + pyruvate = (2S,4S)-4-hydroxy-2,3,4,5-tetrahydrodipicolinate + H2O + H(+). It functions in the pathway amino-acid biosynthesis; L-lysine biosynthesis via DAP pathway; (S)-tetrahydrodipicolinate from L-aspartate: step 3/4. Catalyzes the condensation of (S)-aspartate-beta-semialdehyde [(S)-ASA] and pyruvate to 4-hydroxy-tetrahydrodipicolinate (HTPA). The sequence is that of 4-hydroxy-tetrahydrodipicolinate synthase from Hyphomonas neptunium (strain ATCC 15444).